We begin with the raw amino-acid sequence, 43 residues long: uncharacterized protein (43 aa).

It belongs to the ELIP/psbS family.

Its subcellular location is the plastid. It is found in the chloroplast. Functionally, possible role in chlorophyll and/or carotenoid binding. This is an uncharacterized protein from Cyanidium caldarium (Red alga).